The sequence spans 254 residues: Acetylglutamate kinase (254 aa).

Substrate-binding positions include 40 to 41 (GG), Arg-62, and Asn-158.

This sequence belongs to the acetylglutamate kinase family. ArgB subfamily.

It localises to the cytoplasm. The enzyme catalyses N-acetyl-L-glutamate + ATP = N-acetyl-L-glutamyl 5-phosphate + ADP. It participates in amino-acid biosynthesis; L-arginine biosynthesis; N(2)-acetyl-L-ornithine from L-glutamate: step 2/4. Its function is as follows. Catalyzes the ATP-dependent phosphorylation of N-acetyl-L-glutamate. The polypeptide is Acetylglutamate kinase (Chloroflexus aurantiacus (strain ATCC 29366 / DSM 635 / J-10-fl)).